We begin with the raw amino-acid sequence, 172 residues long: Adenine phosphoribosyltransferase (172 aa).

It belongs to the purine/pyrimidine phosphoribosyltransferase family. Homodimer.

It localises to the cytoplasm. The catalysed reaction is AMP + diphosphate = 5-phospho-alpha-D-ribose 1-diphosphate + adenine. It functions in the pathway purine metabolism; AMP biosynthesis via salvage pathway; AMP from adenine: step 1/1. Functionally, catalyzes a salvage reaction resulting in the formation of AMP, that is energically less costly than de novo synthesis. This Prochlorococcus marinus (strain NATL2A) protein is Adenine phosphoribosyltransferase.